The chain runs to 57 residues: Large ribosomal subunit protein bL32 (57 aa).

Residues 1-19 (MAVPKRRMSRANTRSRRAQ) are compositionally biased toward basic residues. Positions 1–20 (MAVPKRRMSRANTRSRRAQW) are disordered.

Belongs to the bacterial ribosomal protein bL32 family.

This is Large ribosomal subunit protein bL32 from Mycobacterium avium (strain 104).